A 132-amino-acid polypeptide reads, in one-letter code: Small ribosomal subunit protein uS8 (132 aa).

Belongs to the universal ribosomal protein uS8 family. In terms of assembly, part of the 30S ribosomal subunit. Contacts proteins S5 and S12.

In terms of biological role, one of the primary rRNA binding proteins, it binds directly to 16S rRNA central domain where it helps coordinate assembly of the platform of the 30S subunit. This is Small ribosomal subunit protein uS8 from Lacticaseibacillus casei (strain BL23) (Lactobacillus casei).